A 709-amino-acid polypeptide reads, in one-letter code: Translation initiation factor IF-2 (709 aa).

2 stretches are compositionally biased toward basic and acidic residues: residues 47–70 (DHQY…EKPK) and 105–121 (KGKE…EKKL). The disordered stretch occupies residues 47–157 (DHQYRPNTGK…QPAKKEKELP (111 aa)). Residues 125-137 (AKKKGKGPAKGKK) are compositionally biased toward basic residues. Residues 138-149 (QAAPAAKQAPQP) show a composition bias toward low complexity. The region spanning 240–409 (ERPPVVTIMG…LLVSEMEELK (170 aa)) is the tr-type G domain. The tract at residues 249 to 256 (GHVDHGKT) is G1. 249-256 (GHVDHGKT) lines the GTP pocket. A G2 region spans residues 274 to 278 (GITQH). The segment at 295–298 (DTPG) is G3. GTP is bound by residues 295–299 (DTPGH) and 349–352 (NKID). A G4 region spans residues 349–352 (NKID). The G5 stretch occupies residues 385 to 387 (SAK).

It belongs to the TRAFAC class translation factor GTPase superfamily. Classic translation factor GTPase family. IF-2 subfamily.

The protein localises to the cytoplasm. One of the essential components for the initiation of protein synthesis. Protects formylmethionyl-tRNA from spontaneous hydrolysis and promotes its binding to the 30S ribosomal subunits. Also involved in the hydrolysis of GTP during the formation of the 70S ribosomal complex. In Geobacillus kaustophilus (strain HTA426), this protein is Translation initiation factor IF-2.